We begin with the raw amino-acid sequence, 201 residues long: Hydroxymethylphosphonate dioxygenase (201 aa).

6 residues coordinate Fe cation: H47, H71, D72, H94, H117, and D174.

The cofactor is Fe(2+).

It carries out the reaction hydroxymethylphosphonate + O2 = formate + phosphate + 2 H(+). It catalyses the reaction (1R)-(2-amino-1-hydroxyethyl)phosphonate + O2 = glycine + phosphate + 2 H(+). The catalysed reaction is (1R)-(1-hydroxyethyl)phosphonate + O2 = acetate + phosphate + 2 H(+). Functionally, part of an oxidative pathway for utilization of methylphosphonic acid as a phosphate source. Catalyzes the oxidation of hydroxymethylphosphonic acid to produce formate and phosphate. Can also use (1R)-(2-amino-1-hydroxyethyl)phosphonic acid and (R)-1-hydroxyethylphosphonic acid with similar catalytic efficiency. This is Hydroxymethylphosphonate dioxygenase from Gimesia maris (strain ATCC 29201 / DSM 8797 / 534-30) (Planctomyces maris).